A 605-amino-acid polypeptide reads, in one-letter code: uncharacterized protein (605 aa).

Residues 22-93 are disordered; sequence FTEPARFYPS…KQGTAVHGAE (72 aa). A compositionally biased stretch (low complexity) spans 46–57; the sequence is SENASSSVPSHS.

This is an uncharacterized protein from Treponema pallidum (strain Nichols).